We begin with the raw amino-acid sequence, 340 residues long: GTP 3',8-cyclase (340 aa).

The Radical SAM core domain occupies 8 to 230; it reads KLGRPIRDLR…EQHFEIDPVE (223 aa). Residue Arg17 participates in GTP binding. Positions 24 and 28 each coordinate [4Fe-4S] cluster. S-adenosyl-L-methionine is bound at residue Tyr30. Cys31 contributes to the [4Fe-4S] cluster binding site. Arg71 lines the GTP pocket. Gly75 lines the S-adenosyl-L-methionine pocket. Thr102 contacts GTP. Ser126 serves as a coordination point for S-adenosyl-L-methionine. A GTP-binding site is contributed by Lys163. Met197 serves as a coordination point for S-adenosyl-L-methionine. [4Fe-4S] cluster-binding residues include Cys261 and Cys264. Residue 266-268 coordinates GTP; it reads RAR. Cys278 contacts [4Fe-4S] cluster.

It belongs to the radical SAM superfamily. MoaA family. In terms of assembly, monomer and homodimer. [4Fe-4S] cluster serves as cofactor.

It carries out the reaction GTP + AH2 + S-adenosyl-L-methionine = (8S)-3',8-cyclo-7,8-dihydroguanosine 5'-triphosphate + 5'-deoxyadenosine + L-methionine + A + H(+). It participates in cofactor biosynthesis; molybdopterin biosynthesis. Its function is as follows. Catalyzes the cyclization of GTP to (8S)-3',8-cyclo-7,8-dihydroguanosine 5'-triphosphate. This chain is GTP 3',8-cyclase, found in Staphylococcus aureus (strain bovine RF122 / ET3-1).